Here is a 440-residue protein sequence, read N- to C-terminus: Transposon Ty1-JR1 Gag polyprotein (440 aa).

Over residues Met-1–Ser-16 the composition is skewed to low complexity. Disordered stretches follow at residues Met-1–Gln-93, Pro-126–Pro-173, and Gly-352–Tyr-440. Composition is skewed to polar residues over residues Thr-48–Ser-60 and Gln-127–Phe-152. A compositionally biased stretch (low complexity) spans Thr-153–Thr-165. An RNA-binding region spans residues Asn-299–His-401. Residues Asn-402–Ser-418 are compositionally biased toward low complexity. Ser-416 carries the post-translational modification Phosphoserine. Over residues Lys-419–Asn-428 the composition is skewed to polar residues. The segment covering Asn-429–Tyr-440 has biased composition (basic and acidic residues).

As to quaternary structure, homotrimer.

The protein resides in the cytoplasm. Functionally, capsid protein (CA) is the structural component of the virus-like particle (VLP), forming the shell that encapsulates the retrotransposons dimeric RNA genome. The particles are assembled from trimer-clustered units and there are holes in the capsid shells that allow for the diffusion of macromolecules. CA also has nucleocapsid-like chaperone activity, promoting primer tRNA(i)-Met annealing to the multipartite primer-binding site (PBS), dimerization of Ty1 RNA and initiation of reverse transcription. The sequence is that of Transposon Ty1-JR1 Gag polyprotein (TY1A-JR1) from Saccharomyces cerevisiae (strain ATCC 204508 / S288c) (Baker's yeast).